Reading from the N-terminus, the 123-residue chain is Large ribosomal subunit protein uL14 (123 aa).

This sequence belongs to the universal ribosomal protein uL14 family. Part of the 50S ribosomal subunit. Forms a cluster with proteins L3 and L19. In the 70S ribosome, L14 and L19 interact and together make contacts with the 16S rRNA in bridges B5 and B8.

Binds to 23S rRNA. Forms part of two intersubunit bridges in the 70S ribosome. The protein is Large ribosomal subunit protein uL14 of Actinobacillus pleuropneumoniae serotype 7 (strain AP76).